We begin with the raw amino-acid sequence, 297 residues long: Protein PecM (297 aa).

A run of 10 helical transmembrane segments spans residues 6–26 (FAFYAPCVWGTTYFVTTQFLP), 38–58 (ALPAGIILILGKNLPPVGWLW), 60–80 (LFVLGALNIGVFFVMLFFAAY), 86–106 (VVALVGSLQPLIVILLSFLLL), 116–136 (VAAVAGGIGIVLLISLPKAPL), 138–158 (PAGLVASALATMSMASGLVLT), 167–187 (MTMLTFTGWQLFCGGLVILPV), 203–223 (LAGYLYLAIPGSLLAYFMWFS), 231–251 (VIMSLLGFLSPLVALLLGFLF), and 261–281 (LVGVVFIFSALIIVQDISLFS). EamA domains are found at residues 12–130 (CVWG…LLIS) and 149–276 (MSMA…IVQD).

This sequence belongs to the EamA transporter family.

It localises to the cell membrane. Functionally, involved in pectinase, cellulase, and blue pigment regulation. The protein is Protein PecM (pecM) of Dickeya dadantii (strain 3937) (Erwinia chrysanthemi (strain 3937)).